Reading from the N-terminus, the 347-residue chain is Ribosomal RNA small subunit methyltransferase C (347 aa).

It belongs to the methyltransferase superfamily. RsmC family. Monomer.

Its subcellular location is the cytoplasm. It catalyses the reaction guanosine(1207) in 16S rRNA + S-adenosyl-L-methionine = N(2)-methylguanosine(1207) in 16S rRNA + S-adenosyl-L-homocysteine + H(+). Functionally, specifically methylates the guanine in position 1207 of 16S rRNA in the 30S particle. This is Ribosomal RNA small subunit methyltransferase C from Serratia proteamaculans (strain 568).